The chain runs to 246 residues: Auxin-responsive protein IAA11 (246 aa).

An EAR-like (transcriptional repression) motif is present at residues 36 to 40; the sequence is LGLTL. One can recognise a PB1 domain in the interval 136 to 235; the sequence is SMFVKVTMDG…SVRRLRIMKT (100 aa).

The protein belongs to the Aux/IAA family. In terms of assembly, homodimers and heterodimers. Interacts with TPL. Preferentially expressed in stems and flowers.

The protein resides in the nucleus. Its function is as follows. Aux/IAA proteins are short-lived transcriptional factors that function as repressors of early auxin response genes at low auxin concentrations. Repression is thought to result from the interaction with auxin response factors (ARFs), proteins that bind to the auxin-responsive promoter element (AuxRE). Formation of heterodimers with ARF proteins may alter their ability to modulate early auxin response genes expression. The protein is Auxin-responsive protein IAA11 (IAA11) of Arabidopsis thaliana (Mouse-ear cress).